The sequence spans 158 residues: Regulator of sigma D (158 aa).

It belongs to the Rsd/AlgQ family. In terms of assembly, interacts with RpoD.

The protein localises to the cytoplasm. Its function is as follows. Binds RpoD and negatively regulates RpoD-mediated transcription activation by preventing the interaction between the primary sigma factor RpoD with the catalytic core of the RNA polymerase and with promoter DNA. May be involved in replacement of the RNA polymerase sigma subunit from RpoD to RpoS during the transition from exponential growth to the stationary phase. The sequence is that of Regulator of sigma D from Shigella boydii serotype 4 (strain Sb227).